The chain runs to 630 residues: Forkhead box protein O (630 aa).

Positions 1–45 (MDGFVQEWSNLPRSDNGLHMDQLVGELPTDGGFEPQTRARSNTWP) are disordered. Position 43 is a phosphothreonine; by PKB/AKT1 (Thr43). A DNA-binding region (fork-head) is located at residues 92–198 (WGNLSYADLI…ETSRYEKRRG (107 aa)). Ser187 carries the phosphoserine; by PKB/AKT1 modification. Positions 214 to 260 (GLNDATPSPSSSVSEGLDHFPESPLHSGGFQLSPDFRQRASSNASSC) are disordered. Over residues 218-227 (ATPSPSSSVS) the composition is skewed to polar residues. Ser255 is subject to Phosphoserine; by PKB/AKT1. Ser258, Ser259, and Ser264 each carry phosphoserine. Disordered stretches follow at residues 318 to 379 (SAAS…QQQQ) and 403 to 432 (TRDG…SLNT). 2 stretches are compositionally biased toward low complexity: residues 332-350 (QQQQ…QLPQ) and 367-379 (QPQA…QQQQ). Composition is skewed to polar residues over residues 408-417 (SPNSVTTTMS) and 423-432 (SEPSSDSLNT).

As to quaternary structure, interacts with melt.

Its subcellular location is the cytoplasm. It is found in the nucleus. In terms of biological role, transcription factor involved in the regulation of the insulin signaling pathway. Consistently activates both the downstream target Thor\d4EBP and the feedback control target InR. Involved in negative regulation of the cell cycle, modulating cell growth and proliferation. In response to cellular stresses, such as nutrient deprivation or increased levels of reactive oxygen species, foxo is activated and inhibits growth through the action of target genes such as Thor. Foxo activated in the adult fat body can regulate lifespan in adults; an insulin peptide itself may function as one secondary messenger of insulin-regulated aging. Also regulates Lip4, homolog of human acid lipases, thereby acting as a key modulator of lipid metabolism by insulin signaling and integrates insulin responses to glucose and lipid homeostasis. This Drosophila grimshawi (Hawaiian fruit fly) protein is Forkhead box protein O.